Consider the following 216-residue polypeptide: Phosphatidylserine decarboxylase proenzyme (216 aa).

Residue serine 182 is the Schiff-base intermediate with substrate; via pyruvic acid of the active site. Serine 182 bears the Pyruvic acid (Ser); by autocatalysis mark.

This sequence belongs to the phosphatidylserine decarboxylase family. PSD-A subfamily. Heterodimer of a large membrane-associated beta subunit and a small pyruvoyl-containing alpha subunit. Pyruvate serves as cofactor. Post-translationally, is synthesized initially as an inactive proenzyme. Formation of the active enzyme involves a self-maturation process in which the active site pyruvoyl group is generated from an internal serine residue via an autocatalytic post-translational modification. Two non-identical subunits are generated from the proenzyme in this reaction, and the pyruvate is formed at the N-terminus of the alpha chain, which is derived from the carboxyl end of the proenzyme. The post-translation cleavage follows an unusual pathway, termed non-hydrolytic serinolysis, in which the side chain hydroxyl group of the serine supplies its oxygen atom to form the C-terminus of the beta chain, while the remainder of the serine residue undergoes an oxidative deamination to produce ammonia and the pyruvoyl prosthetic group on the alpha chain.

The protein resides in the cell membrane. The enzyme catalyses a 1,2-diacyl-sn-glycero-3-phospho-L-serine + H(+) = a 1,2-diacyl-sn-glycero-3-phosphoethanolamine + CO2. It functions in the pathway phospholipid metabolism; phosphatidylethanolamine biosynthesis; phosphatidylethanolamine from CDP-diacylglycerol: step 2/2. In terms of biological role, catalyzes the formation of phosphatidylethanolamine (PtdEtn) from phosphatidylserine (PtdSer). The protein is Phosphatidylserine decarboxylase proenzyme of Burkholderia pseudomallei (strain 1106a).